We begin with the raw amino-acid sequence, 95 residues long: Large ribosomal subunit protein uL23 (95 aa).

Belongs to the universal ribosomal protein uL23 family. In terms of assembly, part of the 50S ribosomal subunit. Contacts protein L29, and trigger factor when it is bound to the ribosome.

One of the early assembly proteins it binds 23S rRNA. One of the proteins that surrounds the polypeptide exit tunnel on the outside of the ribosome. Forms the main docking site for trigger factor binding to the ribosome. This chain is Large ribosomal subunit protein uL23, found in Desulfatibacillum aliphaticivorans.